The following is an 88-amino-acid chain: Eclosion hormone (88 aa).

An N-terminal signal peptide occupies residues 1–26 (MAGKVTVAFFMFAMIAFLANFGYVEC). 3 cysteine pairs are disulfide-bonded: cysteine 40-cysteine 64, cysteine 44-cysteine 60, and cysteine 47-cysteine 75.

The protein belongs to the insect eclosion hormone family.

The protein resides in the secreted. Neuropeptide that triggers the performance of ecdysis behaviors at the end of a molt. It triggers adult behavior patterns: larval, pupal and adult ecdysis, and plasticization during the molt. In Manduca sexta (Tobacco hawkmoth), this protein is Eclosion hormone.